We begin with the raw amino-acid sequence, 301 residues long: Helicase VP6-A (301 aa).

Disordered stretches follow at residues 1 to 99 and 163 to 208; these read MIDW…TTGT and RRKE…TSVG. Composition is skewed to basic and acidic residues over residues 8–30, 37–55, and 67–81; these read ESGKGDKVEPKEENEAEESKDGE, GQKKESSKEAEDADVDRRV, and GFRERANENVDRGDG. Residue K82 coordinates ATP. Composition is skewed to basic and acidic residues over residues 163 to 177 and 186 to 202; these read RRKEKSETHARVAEK and VHGDAQKESTEDEKTPE.

This sequence belongs to the orbivirus VP6 family. Homohexamer.

It localises to the virion. The catalysed reaction is ATP + H2O = ADP + phosphate + H(+). Its function is as follows. ATP dependent RNA helicase essential for RNA packaging and viral transcription. Possesses ss- and dsRNA-binding capacity. This is Helicase VP6-A (Segment-9) from Bluetongue virus 2 (isolate USA) (BTV 2).